A 339-amino-acid chain; its full sequence is Ketol-acid reductoisomerase (NADP(+)) (339 aa).

The region spanning M1–T182 is the KARI N-terminal Rossmann domain. NADP(+) contacts are provided by residues Y24–Q27, R48, S51, S53, and D83–Q86. Residue H108 is part of the active site. NADP(+) is bound at residue G134. The 146-residue stretch at T183–I328 folds into the KARI C-terminal knotted domain. Residues D191, E195, E227, and E231 each contribute to the Mg(2+) site. S252 provides a ligand contact to substrate.

Belongs to the ketol-acid reductoisomerase family. The cofactor is Mg(2+).

The enzyme catalyses (2R)-2,3-dihydroxy-3-methylbutanoate + NADP(+) = (2S)-2-acetolactate + NADPH + H(+). The catalysed reaction is (2R,3R)-2,3-dihydroxy-3-methylpentanoate + NADP(+) = (S)-2-ethyl-2-hydroxy-3-oxobutanoate + NADPH + H(+). It participates in amino-acid biosynthesis; L-isoleucine biosynthesis; L-isoleucine from 2-oxobutanoate: step 2/4. It functions in the pathway amino-acid biosynthesis; L-valine biosynthesis; L-valine from pyruvate: step 2/4. In terms of biological role, involved in the biosynthesis of branched-chain amino acids (BCAA). Catalyzes an alkyl-migration followed by a ketol-acid reduction of (S)-2-acetolactate (S2AL) to yield (R)-2,3-dihydroxy-isovalerate. In the isomerase reaction, S2AL is rearranged via a Mg-dependent methyl migration to produce 3-hydroxy-3-methyl-2-ketobutyrate (HMKB). In the reductase reaction, this 2-ketoacid undergoes a metal-dependent reduction by NADPH to yield (R)-2,3-dihydroxy-isovalerate. The chain is Ketol-acid reductoisomerase (NADP(+)) from Chelativorans sp. (strain BNC1).